A 354-amino-acid chain; its full sequence is 3-dehydroquinate synthase (354 aa).

NAD(+)-binding positions include 69–74 (DGEAEK), 103–107 (GVIGD), 127–128 (TS), Lys140, and Lys149. Positions 182, 245, and 262 each coordinate Zn(2+).

Belongs to the sugar phosphate cyclases superfamily. Dehydroquinate synthase family. Co(2+) is required as a cofactor. Requires Zn(2+) as cofactor. NAD(+) serves as cofactor.

It is found in the cytoplasm. The catalysed reaction is 7-phospho-2-dehydro-3-deoxy-D-arabino-heptonate = 3-dehydroquinate + phosphate. It functions in the pathway metabolic intermediate biosynthesis; chorismate biosynthesis; chorismate from D-erythrose 4-phosphate and phosphoenolpyruvate: step 2/7. Its function is as follows. Catalyzes the conversion of 3-deoxy-D-arabino-heptulosonate 7-phosphate (DAHP) to dehydroquinate (DHQ). In Colwellia psychrerythraea (strain 34H / ATCC BAA-681) (Vibrio psychroerythus), this protein is 3-dehydroquinate synthase.